We begin with the raw amino-acid sequence, 118 residues long: Ribosome-binding factor A (118 aa).

It belongs to the RbfA family. In terms of assembly, monomer. Binds 30S ribosomal subunits, but not 50S ribosomal subunits or 70S ribosomes.

It localises to the cytoplasm. One of several proteins that assist in the late maturation steps of the functional core of the 30S ribosomal subunit. Associates with free 30S ribosomal subunits (but not with 30S subunits that are part of 70S ribosomes or polysomes). Required for efficient processing of 16S rRNA. May interact with the 5'-terminal helix region of 16S rRNA. This is Ribosome-binding factor A from Bacillus anthracis (strain A0248).